The sequence spans 340 residues: GTP 3',8-cyclase (340 aa).

The 222-residue stretch at 8 to 229 folds into the Radical SAM core domain; the sequence is KLGRPIRDLR…IEQHFEISPV (222 aa). Arg-17 contributes to the GTP binding site. [4Fe-4S] cluster-binding residues include Cys-24 and Cys-28. Tyr-30 is an S-adenosyl-L-methionine binding site. Cys-31 contributes to the [4Fe-4S] cluster binding site. Position 71 (Arg-71) interacts with GTP. Gly-75 contributes to the S-adenosyl-L-methionine binding site. Position 102 (Thr-102) interacts with GTP. Residue Ser-126 participates in S-adenosyl-L-methionine binding. Lys-163 provides a ligand contact to GTP. S-adenosyl-L-methionine is bound at residue Met-197. [4Fe-4S] cluster is bound by residues Cys-261 and Cys-264. Position 266–268 (266–268) interacts with GTP; sequence RAR. Cys-278 is a [4Fe-4S] cluster binding site.

Belongs to the radical SAM superfamily. MoaA family. As to quaternary structure, monomer and homodimer. The cofactor is [4Fe-4S] cluster.

It carries out the reaction GTP + AH2 + S-adenosyl-L-methionine = (8S)-3',8-cyclo-7,8-dihydroguanosine 5'-triphosphate + 5'-deoxyadenosine + L-methionine + A + H(+). The protein operates within cofactor biosynthesis; molybdopterin biosynthesis. In terms of biological role, catalyzes the cyclization of GTP to (8S)-3',8-cyclo-7,8-dihydroguanosine 5'-triphosphate. The sequence is that of GTP 3',8-cyclase from Staphylococcus epidermidis (strain ATCC 35984 / DSM 28319 / BCRC 17069 / CCUG 31568 / BM 3577 / RP62A).